A 336-amino-acid polypeptide reads, in one-letter code: Holliday junction branch migration complex subunit RuvB (336 aa).

The segment at 1–183 (MATERLVAGN…FGINSRLEFY (183 aa)) is large ATPase domain (RuvB-L). ATP-binding positions include leucine 22, arginine 23, glycine 64, lysine 67, threonine 68, threonine 69, 130 to 132 (EDF), arginine 173, tyrosine 183, and arginine 220. Threonine 68 lines the Mg(2+) pocket. The segment at 184-254 (QVAELEEIIR…VAREALELLQ (71 aa)) is small ATPAse domain (RuvB-S). The interval 257 to 336 (AAGLDSSDRR…LGIKPEDRLF (80 aa)) is head domain (RuvB-H). Residues arginine 312 and arginine 317 each coordinate DNA.

Belongs to the RuvB family. In terms of assembly, homohexamer. Forms an RuvA(8)-RuvB(12)-Holliday junction (HJ) complex. HJ DNA is sandwiched between 2 RuvA tetramers; dsDNA enters through RuvA and exits via RuvB. An RuvB hexamer assembles on each DNA strand where it exits the tetramer. Each RuvB hexamer is contacted by two RuvA subunits (via domain III) on 2 adjacent RuvB subunits; this complex drives branch migration. In the full resolvosome a probable DNA-RuvA(4)-RuvB(12)-RuvC(2) complex forms which resolves the HJ.

It is found in the cytoplasm. It carries out the reaction ATP + H2O = ADP + phosphate + H(+). In terms of biological role, the RuvA-RuvB-RuvC complex processes Holliday junction (HJ) DNA during genetic recombination and DNA repair, while the RuvA-RuvB complex plays an important role in the rescue of blocked DNA replication forks via replication fork reversal (RFR). RuvA specifically binds to HJ cruciform DNA, conferring on it an open structure. The RuvB hexamer acts as an ATP-dependent pump, pulling dsDNA into and through the RuvAB complex. RuvB forms 2 homohexamers on either side of HJ DNA bound by 1 or 2 RuvA tetramers; 4 subunits per hexamer contact DNA at a time. Coordinated motions by a converter formed by DNA-disengaged RuvB subunits stimulates ATP hydrolysis and nucleotide exchange. Immobilization of the converter enables RuvB to convert the ATP-contained energy into a lever motion, pulling 2 nucleotides of DNA out of the RuvA tetramer per ATP hydrolyzed, thus driving DNA branch migration. The RuvB motors rotate together with the DNA substrate, which together with the progressing nucleotide cycle form the mechanistic basis for DNA recombination by continuous HJ branch migration. Branch migration allows RuvC to scan DNA until it finds its consensus sequence, where it cleaves and resolves cruciform DNA. The sequence is that of Holliday junction branch migration complex subunit RuvB from Moorella thermoacetica (strain ATCC 39073 / JCM 9320).